Consider the following 536-residue polypeptide: Apolipoprotein N-acyltransferase (536 aa).

7 helical membrane-spanning segments follow: residues I10–G30, A42–A62, W76–V96, A107–A127, L136–G158, I181–I201, and A212–L232. A CN hydrolase domain is found at M248–A501. E295 serves as the catalytic Proton acceptor. K360 is a catalytic residue. C413 (nucleophile) is an active-site residue. Residues A509–L529 traverse the membrane as a helical segment.

Belongs to the CN hydrolase family. Apolipoprotein N-acyltransferase subfamily.

It localises to the cell inner membrane. It catalyses the reaction N-terminal S-1,2-diacyl-sn-glyceryl-L-cysteinyl-[lipoprotein] + a glycerophospholipid = N-acyl-S-1,2-diacyl-sn-glyceryl-L-cysteinyl-[lipoprotein] + a 2-acyl-sn-glycero-3-phospholipid + H(+). Its pathway is protein modification; lipoprotein biosynthesis (N-acyl transfer). In terms of biological role, catalyzes the phospholipid dependent N-acylation of the N-terminal cysteine of apolipoprotein, the last step in lipoprotein maturation. The sequence is that of Apolipoprotein N-acyltransferase from Rhodopseudomonas palustris (strain ATCC BAA-98 / CGA009).